We begin with the raw amino-acid sequence, 293 residues long: uncharacterized protein (293 aa).

The segment at 1–22 (MTFNEGVQIDTSTTSTSGSGGG) is disordered. A helical transmembrane segment spans residues 25 to 45 (LAIGGGLGGLLVVVVAMLLGV). The interval 243-265 (GDDRIQQQTTGRTNPETWTHGSA) is disordered. Over residues 248–265 (QQQTTGRTNPETWTHGSA) the composition is skewed to polar residues.

It localises to the membrane. This is an uncharacterized protein from Mycobacterium tuberculosis (strain CDC 1551 / Oshkosh).